The sequence spans 222 residues: N-(5'-phosphoribosyl)anthranilate isomerase (222 aa).

It belongs to the TrpF family.

The catalysed reaction is N-(5-phospho-beta-D-ribosyl)anthranilate = 1-(2-carboxyphenylamino)-1-deoxy-D-ribulose 5-phosphate. It participates in amino-acid biosynthesis; L-tryptophan biosynthesis; L-tryptophan from chorismate: step 3/5. The chain is N-(5'-phosphoribosyl)anthranilate isomerase from Rhizobium leguminosarum bv. trifolii (strain WSM2304).